A 177-amino-acid polypeptide reads, in one-letter code: Outer membrane lipoprotein Blc (177 aa).

The N-terminal stretch at 1-18 is a signal peptide; that stretch reads MRLLPLVAAATAAFLVVA. Cysteine 19 carries N-palmitoyl cysteine lipidation. The S-diacylglycerol cysteine moiety is linked to residue cysteine 19.

It belongs to the calycin superfamily. Lipocalin family. In terms of assembly, homodimer.

It localises to the cell outer membrane. Functionally, involved in the storage or transport of lipids necessary for membrane maintenance under stressful conditions. Displays a binding preference for lysophospholipids. In Escherichia coli O157:H7, this protein is Outer membrane lipoprotein Blc (blc).